Here is a 474-residue protein sequence, read N- to C-terminus: Phenylalanine--tRNA ligase alpha subunit (474 aa).

Residues Thr-317, 356–358 (QLE), and Tyr-396 each bind L-phenylalanine. Glu-398 lines the Mg(2+) pocket. L-phenylalanine is bound at residue Phe-421.

Belongs to the class-II aminoacyl-tRNA synthetase family. Phe-tRNA synthetase alpha subunit type 2 subfamily. Tetramer of two alpha and two beta subunits. Mg(2+) is required as a cofactor.

Its subcellular location is the cytoplasm. It carries out the reaction tRNA(Phe) + L-phenylalanine + ATP = L-phenylalanyl-tRNA(Phe) + AMP + diphosphate + H(+). This chain is Phenylalanine--tRNA ligase alpha subunit, found in Archaeoglobus fulgidus (strain ATCC 49558 / DSM 4304 / JCM 9628 / NBRC 100126 / VC-16).